The sequence spans 371 residues: 4-hydroxy-3-methylbut-2-en-1-yl diphosphate synthase (flavodoxin) (371 aa).

4 residues coordinate [4Fe-4S] cluster: cysteine 271, cysteine 274, cysteine 306, and glutamate 313.

Belongs to the IspG family. [4Fe-4S] cluster is required as a cofactor.

It catalyses the reaction (2E)-4-hydroxy-3-methylbut-2-enyl diphosphate + oxidized [flavodoxin] + H2O + 2 H(+) = 2-C-methyl-D-erythritol 2,4-cyclic diphosphate + reduced [flavodoxin]. Its pathway is isoprenoid biosynthesis; isopentenyl diphosphate biosynthesis via DXP pathway; isopentenyl diphosphate from 1-deoxy-D-xylulose 5-phosphate: step 5/6. Functionally, converts 2C-methyl-D-erythritol 2,4-cyclodiphosphate (ME-2,4cPP) into 1-hydroxy-2-methyl-2-(E)-butenyl 4-diphosphate. This chain is 4-hydroxy-3-methylbut-2-en-1-yl diphosphate synthase (flavodoxin), found in Actinobacillus succinogenes (strain ATCC 55618 / DSM 22257 / CCUG 43843 / 130Z).